A 239-amino-acid polypeptide reads, in one-letter code: tRNA (guanine-N(7)-)-methyltransferase (239 aa).

Residues Glu-68, Glu-93, Asp-120, and Asp-143 each contribute to the S-adenosyl-L-methionine site. Residue Asp-143 is part of the active site. Substrate is bound by residues Lys-147, Asp-180, and 217–220 (TKFE).

This sequence belongs to the class I-like SAM-binding methyltransferase superfamily. TrmB family.

It catalyses the reaction guanosine(46) in tRNA + S-adenosyl-L-methionine = N(7)-methylguanosine(46) in tRNA + S-adenosyl-L-homocysteine. The protein operates within tRNA modification; N(7)-methylguanine-tRNA biosynthesis. In terms of biological role, catalyzes the formation of N(7)-methylguanine at position 46 (m7G46) in tRNA. This chain is tRNA (guanine-N(7)-)-methyltransferase, found in Vibrio vulnificus (strain CMCP6).